We begin with the raw amino-acid sequence, 514 residues long: 2,3-bisphosphoglycerate-independent phosphoglycerate mutase (514 aa).

Mn(2+)-binding residues include aspartate 14 and serine 64. Catalysis depends on serine 64, which acts as the Phosphoserine intermediate. Substrate contacts are provided by residues histidine 125, arginine 155–aspartate 156, arginine 187, arginine 193, arginine 263–arginine 266, and lysine 336. Mn(2+) is bound by residues aspartate 403, histidine 407, aspartate 444, histidine 445, and histidine 463.

It belongs to the BPG-independent phosphoglycerate mutase family. In terms of assembly, monomer. It depends on Mn(2+) as a cofactor.

The enzyme catalyses (2R)-2-phosphoglycerate = (2R)-3-phosphoglycerate. It functions in the pathway carbohydrate degradation; glycolysis; pyruvate from D-glyceraldehyde 3-phosphate: step 3/5. Its function is as follows. Catalyzes the interconversion of 2-phosphoglycerate and 3-phosphoglycerate. In Shewanella sp. (strain MR-7), this protein is 2,3-bisphosphoglycerate-independent phosphoglycerate mutase.